The primary structure comprises 274 residues: 2,3,4,5-tetrahydropyridine-2,6-dicarboxylate N-succinyltransferase (274 aa).

Substrate-binding residues include Arg-104 and Asp-141.

This sequence belongs to the transferase hexapeptide repeat family. Homotrimer.

Its subcellular location is the cytoplasm. It carries out the reaction (S)-2,3,4,5-tetrahydrodipicolinate + succinyl-CoA + H2O = (S)-2-succinylamino-6-oxoheptanedioate + CoA. The protein operates within amino-acid biosynthesis; L-lysine biosynthesis via DAP pathway; LL-2,6-diaminopimelate from (S)-tetrahydrodipicolinate (succinylase route): step 1/3. The polypeptide is 2,3,4,5-tetrahydropyridine-2,6-dicarboxylate N-succinyltransferase (Serratia proteamaculans (strain 568)).